Here is a 421-residue protein sequence, read N- to C-terminus: UDP-N-acetylglucosamine 1-carboxyvinyltransferase (421 aa).

22–23 is a binding site for phosphoenolpyruvate; the sequence is KN. A UDP-N-acetyl-alpha-D-glucosamine-binding site is contributed by arginine 93. Cysteine 117 functions as the Proton donor in the catalytic mechanism. Cysteine 117 carries the 2-(S-cysteinyl)pyruvic acid O-phosphothioketal modification. Residues 122-126, aspartate 308, and valine 330 contribute to the UDP-N-acetyl-alpha-D-glucosamine site; that span reads RPVDL.

Belongs to the EPSP synthase family. MurA subfamily.

It localises to the cytoplasm. It carries out the reaction phosphoenolpyruvate + UDP-N-acetyl-alpha-D-glucosamine = UDP-N-acetyl-3-O-(1-carboxyvinyl)-alpha-D-glucosamine + phosphate. It functions in the pathway cell wall biogenesis; peptidoglycan biosynthesis. Functionally, cell wall formation. Adds enolpyruvyl to UDP-N-acetylglucosamine. This chain is UDP-N-acetylglucosamine 1-carboxyvinyltransferase, found in Pseudomonas aeruginosa (strain LESB58).